The primary structure comprises 414 residues: 3-oxoacyl-[acyl-carrier-protein] synthase 2 (414 aa).

The region spanning 4–411 is the Ketosynthase family 3 (KS3) domain; the sequence is NKRVVITGMG…GHNAVLVFKK (408 aa). Active-site for beta-ketoacyl synthase activity residues include cysteine 165, histidine 304, and histidine 341.

Belongs to the thiolase-like superfamily. Beta-ketoacyl-ACP synthases family.

The enzyme catalyses a fatty acyl-[ACP] + malonyl-[ACP] + H(+) = a 3-oxoacyl-[ACP] + holo-[ACP] + CO2. It carries out the reaction (9Z)-hexadecenoyl-[ACP] + malonyl-[ACP] + H(+) = 3-oxo-(11Z)-octadecenoyl-[ACP] + holo-[ACP] + CO2. Its pathway is lipid metabolism; fatty acid biosynthesis. Its function is as follows. Involved in the type II fatty acid elongation cycle. Catalyzes the elongation of a wide range of acyl-ACP by the addition of two carbons from malonyl-ACP to an acyl acceptor. Can efficiently catalyze the conversion of palmitoleoyl-ACP (cis-hexadec-9-enoyl-ACP) to cis-vaccenoyl-ACP (cis-octadec-11-enoyl-ACP), an essential step in the thermal regulation of fatty acid composition. In Staphylococcus aureus (strain Mu50 / ATCC 700699), this protein is 3-oxoacyl-[acyl-carrier-protein] synthase 2 (fabF).